The following is a 745-amino-acid chain: Polyribonucleotide nucleotidyltransferase (745 aa).

2 residues coordinate Mg(2+): Asp-487 and Asp-493. The region spanning Pro-554–Ile-613 is the KH domain. Residues Gly-623 to Lys-691 enclose the S1 motif domain. Residues Ala-693–Thr-732 form a disordered region. Basic and acidic residues predominate over residues Asn-707–Asp-719.

Belongs to the polyribonucleotide nucleotidyltransferase family. The cofactor is Mg(2+).

It localises to the cytoplasm. The catalysed reaction is RNA(n+1) + phosphate = RNA(n) + a ribonucleoside 5'-diphosphate. In terms of biological role, involved in mRNA degradation. Catalyzes the phosphorolysis of single-stranded polyribonucleotides processively in the 3'- to 5'-direction. The sequence is that of Polyribonucleotide nucleotidyltransferase from Rickettsia prowazekii (strain Madrid E).